A 566-amino-acid chain; its full sequence is Putative pentatricopeptide repeat-containing protein At1g28020 (566 aa).

9 PPR repeats span residues 136–171, 172–206, 207–242, 243–273, 279–309, 314–348, 349–385, 468–504, and 505–540; these read GDSVYTSLLNSYARSDKTLCKAEATFQKMRDLGLLL, RPVPYNAMMSLYSALKNREKVEELLLEMKDNDVEA, DNVTVNNVLKLYSAVCDVTEMEKFLNKWEGIHGIKL, EWHTTLDMAKAYLRARSSGKAMKMLRLTEQL, LKSAYDHLMKLYGEAGNREEVLRVWKLYKSK, DNNGYRTVIRSLLKVDDIVGAEEIYKVWESLPLEF, DHRIPTMLASGYRDRGMTEKAEKLMNSKTIKDRRMNK, DYSVYVALLSSYAKSDKNLGNMVDEILREMEENNVDP, and DLITVNHVLKVYAAESKIQAMEMFMRRWGTEDGIKL.

This sequence belongs to the PPR family. P subfamily.

This chain is Putative pentatricopeptide repeat-containing protein At1g28020, found in Arabidopsis thaliana (Mouse-ear cress).